Here is a 218-residue protein sequence, read N- to C-terminus: Thiamine-phosphate synthase (218 aa).

Residues 43 to 47 and Asn78 each bind 4-amino-2-methyl-5-(diphosphooxymethyl)pyrimidine; that span reads QFRDK. 2 residues coordinate Mg(2+): Asp79 and Asp98. Ser117 contacts 4-amino-2-methyl-5-(diphosphooxymethyl)pyrimidine. 143–145 serves as a coordination point for 2-[(2R,5Z)-2-carboxy-4-methylthiazol-5(2H)-ylidene]ethyl phosphate; that stretch reads TNS. Lys146 contributes to the 4-amino-2-methyl-5-(diphosphooxymethyl)pyrimidine binding site. 2-[(2R,5Z)-2-carboxy-4-methylthiazol-5(2H)-ylidene]ethyl phosphate contacts are provided by residues Gly174 and 194–195; that span reads IS.

The protein belongs to the thiamine-phosphate synthase family. Mg(2+) is required as a cofactor.

It catalyses the reaction 2-[(2R,5Z)-2-carboxy-4-methylthiazol-5(2H)-ylidene]ethyl phosphate + 4-amino-2-methyl-5-(diphosphooxymethyl)pyrimidine + 2 H(+) = thiamine phosphate + CO2 + diphosphate. The enzyme catalyses 2-(2-carboxy-4-methylthiazol-5-yl)ethyl phosphate + 4-amino-2-methyl-5-(diphosphooxymethyl)pyrimidine + 2 H(+) = thiamine phosphate + CO2 + diphosphate. The catalysed reaction is 4-methyl-5-(2-phosphooxyethyl)-thiazole + 4-amino-2-methyl-5-(diphosphooxymethyl)pyrimidine + H(+) = thiamine phosphate + diphosphate. The protein operates within cofactor biosynthesis; thiamine diphosphate biosynthesis; thiamine phosphate from 4-amino-2-methyl-5-diphosphomethylpyrimidine and 4-methyl-5-(2-phosphoethyl)-thiazole: step 1/1. Condenses 4-methyl-5-(beta-hydroxyethyl)thiazole monophosphate (THZ-P) and 2-methyl-4-amino-5-hydroxymethyl pyrimidine pyrophosphate (HMP-PP) to form thiamine monophosphate (TMP). The chain is Thiamine-phosphate synthase from Lactococcus lactis subsp. cremoris (strain MG1363).